Here is a 354-residue protein sequence, read N- to C-terminus: Rhodopsin (354 aa).

Residues 1–36 (MNGTEGPNFYIPMSNKTGVVRSPFEYPQYYLAEPWQ) are Extracellular-facing. N-linked (GlcNAc...) asparagine glycans are attached at residues asparagine 2 and asparagine 15. The chain crosses the membrane as a helical span at residues 37–61 (YSILCAYMFLLILLGFPINFMTLYV). At 62-73 (TIQHKKLRTPLN) the chain is on the cytoplasmic side. The chain crosses the membrane as a helical span at residues 74–96 (YILLNLAFANHFMVLCGFTVTMY). Residues 97–110 (SSMNGYFILGATGC) lie on the Extracellular side of the membrane. An intrachain disulfide couples cysteine 110 to cysteine 187. The chain crosses the membrane as a helical span at residues 111–133 (YVEGFFATLGGEIALWSLVVLAI). Residues 134-136 (ERY) carry the 'Ionic lock' involved in activated form stabilization motif. Topologically, residues 134-152 (ERYVVVCKPMSNFRFSENH) are cytoplasmic. The chain crosses the membrane as a helical span at residues 153 to 173 (AVMGVAFTWIMALSCAVPPLL). Residues 174–202 (GWSRYIPEGMQCSCGVDYYTLKPEVNNES) are Extracellular-facing. The helical transmembrane segment at 203–224 (FVIYMFVVHFTIPLIIIFFCYG) threads the bilayer. The Cytoplasmic segment spans residues 225 to 252 (RLVCTVKEAAAQQQESATTQKAEKEVTR). Residues 253–274 (MVIIMVVFFLICWVPYASVAFF) form a helical membrane-spanning segment. Topologically, residues 275 to 286 (IFSNQGSEFGPI) are extracellular. Residues 287 to 308 (FMTVPAFFAKSSSIYNPVIYIM) traverse the membrane as a helical segment. Position 296 is an N6-(retinylidene)lysine (lysine 296). Residues 309 to 354 (LNKQFRNCMITTLCCGKNPFGEDDASSAATSKTEASSVSSSQVSPA) are Cytoplasmic-facing. Residues cysteine 322 and cysteine 323 are each lipidated (S-palmitoyl cysteine). Positions 331–354 (DDASSAATSKTEASSVSSSQVSPA) are disordered. Positions 334–354 (SSAATSKTEASSVSSSQVSPA) are enriched in low complexity.

The protein belongs to the G-protein coupled receptor 1 family. Opsin subfamily. Contains one covalently linked retinal chromophore. Upon light absorption, the covalently bound 11-cis-retinal is converted to all-trans-retinal. After hydrolysis of the Schiff base and release of the covalently bound all-trans-retinal, active rhodopsin is regenerated by binding of a fresh molecule of 11-cis-retinal.

The protein resides in the membrane. It is found in the cell projection. It localises to the cilium. The protein localises to the photoreceptor outer segment. Functionally, photoreceptor required for image-forming vision at low light intensity. Required for photoreceptor cell viability after birth. Light-induced isomerization of 11-cis to all-trans retinal triggers a conformational change that activates signaling via G-proteins. Subsequent receptor phosphorylation mediates displacement of the bound G-protein alpha subunit by arrestin and terminates signaling. The chain is Rhodopsin (RHO) from Bufo bufo (European toad).